Reading from the N-terminus, the 506-residue chain is Histidine ammonia-lyase (506 aa).

Residues 143 to 145 (ASG) constitute a cross-link (5-imidazolinone (Ala-Gly)). Position 144 is a 2,3-didehydroalanine (Ser) (Ser-144).

It belongs to the PAL/histidase family. Post-translationally, contains an active site 4-methylidene-imidazol-5-one (MIO), which is formed autocatalytically by cyclization and dehydration of residues Ala-Ser-Gly.

The protein resides in the cytoplasm. The enzyme catalyses L-histidine = trans-urocanate + NH4(+). The protein operates within amino-acid degradation; L-histidine degradation into L-glutamate; N-formimidoyl-L-glutamate from L-histidine: step 1/3. The protein is Histidine ammonia-lyase of Salmonella paratyphi A (strain ATCC 9150 / SARB42).